A 592-amino-acid chain; its full sequence is Aspartate--tRNA(Asp/Asn) ligase (592 aa).

E175 contributes to the L-aspartate binding site. The segment at 199-202 (QLFK) is aspartate. Position 221 (R221) interacts with L-aspartate. ATP-binding positions include 221–223 (RDE) and Q230. Residue H450 participates in L-aspartate binding. E483 serves as a coordination point for ATP. R490 contacts L-aspartate. Residue 535–538 (GLDR) coordinates ATP.

It belongs to the class-II aminoacyl-tRNA synthetase family. Type 1 subfamily. As to quaternary structure, homodimer.

The protein localises to the cytoplasm. It carries out the reaction tRNA(Asx) + L-aspartate + ATP = L-aspartyl-tRNA(Asx) + AMP + diphosphate. Functionally, aspartyl-tRNA synthetase with relaxed tRNA specificity since it is able to aspartylate not only its cognate tRNA(Asp) but also tRNA(Asn). Reaction proceeds in two steps: L-aspartate is first activated by ATP to form Asp-AMP and then transferred to the acceptor end of tRNA(Asp/Asn). The sequence is that of Aspartate--tRNA(Asp/Asn) ligase from Acinetobacter baumannii (strain ATCC 17978 / DSM 105126 / CIP 53.77 / LMG 1025 / NCDC KC755 / 5377).